The following is a 317-amino-acid chain: MHNYLDFEKPISDLEGKILELKKLASEDESVNTSDEIARLEGRVRDAMVEIYSKLSPWQKTQVARHPSRPHFLDYASRLFTEFTPLAGDRNFANDDAIQAGLARFHGTPVAVIGQEKGNDTKSRIKHNFGSPRPEGYRKATRIMEMADRFGLPLITLVDTAGAYPGVNAEERGQAEAIARSTEMCLNVKVPIVTVVIGEGGSGGAIAIATGNRVYMLEHAIYSVISPEGAASILWRDSTRAKEAASNMKITAEDLKSLGVIDGIIPEPVGGAHRDPDAVISRTETVIGDALKELSARNGDELRADRRQKYLNIGRNL.

The CoA carboxyltransferase C-terminal domain maps to 40–293; that stretch reads LEGRVRDAMV…ETVIGDALKE (254 aa).

This sequence belongs to the AccA family. Acetyl-CoA carboxylase is a heterohexamer composed of biotin carboxyl carrier protein (AccB), biotin carboxylase (AccC) and two subunits each of ACCase subunit alpha (AccA) and ACCase subunit beta (AccD).

It localises to the cytoplasm. The catalysed reaction is N(6)-carboxybiotinyl-L-lysyl-[protein] + acetyl-CoA = N(6)-biotinyl-L-lysyl-[protein] + malonyl-CoA. The protein operates within lipid metabolism; malonyl-CoA biosynthesis; malonyl-CoA from acetyl-CoA: step 1/1. In terms of biological role, component of the acetyl coenzyme A carboxylase (ACC) complex. First, biotin carboxylase catalyzes the carboxylation of biotin on its carrier protein (BCCP) and then the CO(2) group is transferred by the carboxyltransferase to acetyl-CoA to form malonyl-CoA. This is Acetyl-coenzyme A carboxylase carboxyl transferase subunit alpha from Rhizobium meliloti (strain 1021) (Ensifer meliloti).